Reading from the N-terminus, the 352-residue chain is Histidine protein kinase SaeS (352 aa).

Transmembrane regions (helical) follow at residues 9 to 29 (QIIIGVISSVILTTIILVIAY) and 41 to 61 (TLAITTMITSCLTLSICSIFI). The Histidine kinase domain occupies 130–349 (NLAHDLKTPL…TMTLTLKKFQ (220 aa)). H133 bears the Phosphohistidine; by autocatalysis mark.

In terms of processing, autophosphorylated.

It is found in the cell membrane. It catalyses the reaction ATP + protein L-histidine = ADP + protein N-phospho-L-histidine.. In terms of biological role, member of the two-component regulatory system SaeR/SaeS. Probably functions as a membrane-associated protein kinase that upon sensing the appropriate signal, autophosphorylates and in turn activates the cytosolic response regulator SaeR. The protein is Histidine protein kinase SaeS (saeS) of Staphylococcus epidermidis (strain ATCC 35984 / DSM 28319 / BCRC 17069 / CCUG 31568 / BM 3577 / RP62A).